A 526-amino-acid chain; its full sequence is MSPSHAKLATVLLFDVATASADVGGTPSRLTKVARIADLLRRAAPDAALVAIVVSWLSGELRQRQIGVGWAALRSRPPAAAHPTLTVVAVDAAFAEIGAVAGKGAQARRAALLNALFAAATETEQTFLLRLLGGELRQGALAGIMADAVARAAGIPAAAVQRAAMLGGDLPAVAAAALSGEAAALSGEASALDAFTLRVGRPVAPMLAQTAAGVAEAIERHGGQAIFEAKLDGARVQIHRAGDQVTVYTRSLDDVTARLPEVVTATLALPVEALIADGEAIALRPDNSPQRFQVTASRFGRSVDVAAAVAAQPLSVFFFDILHCDGVDLLDAPTTDRLAALDALVPPAQRVDQLLTADPDAAGRFLEATLAAGHEGVMAKAPGAPYQAGRRGAGWLKVKPVHTLDLVVLAVEWGSGRRRGKLSNIHLGARDPATGEFVMVGKTFKGMTDAMLDWQTARFTELAVGGTDGYVVRVRPEQVVEVAVDGVQKSSRYPGGLALRFARVLRYRDDKGPAEADTIDAVRALY.

Residue Glu-228 coordinates ATP. Residue Lys-230 is the N6-AMP-lysine intermediate of the active site. Positions 235, 250, 279, 319, 391, and 397 each coordinate ATP.

Belongs to the ATP-dependent DNA ligase family. It depends on Mg(2+) as a cofactor.

It catalyses the reaction ATP + (deoxyribonucleotide)n-3'-hydroxyl + 5'-phospho-(deoxyribonucleotide)m = (deoxyribonucleotide)n+m + AMP + diphosphate.. DNA ligase that seals nicks in double-stranded DNA during DNA replication, DNA recombination and DNA repair. This chain is Probable DNA ligase, found in Mycobacterium avium (strain 104).